Reading from the N-terminus, the 362-residue chain is Tyrosine-protein kinase SRK2 (362 aa).

One can recognise an SH2 domain in the interval 1–70; it reads TFLVRESESK…GLCVNLRQPC (70 aa). Residues 95–348 form the Protein kinase domain; it reads ITLIRKLGAG…ALQWRLEDFF (254 aa). ATP is bound by residues 101 to 109 and Lys-123; that span reads LGAGQFGEV. Asp-214 (proton acceptor) is an active-site residue.

Belongs to the protein kinase superfamily. Tyr protein kinase family.

It is found in the cytoplasm. The catalysed reaction is L-tyrosyl-[protein] + ATP = O-phospho-L-tyrosyl-[protein] + ADP + H(+). The polypeptide is Tyrosine-protein kinase SRK2 (SRK2) (Spongilla lacustris (Freshwater sponge)).